Here is a 387-residue protein sequence, read N- to C-terminus: Aminodeoxyfutalosine synthase (387 aa).

In terms of domain architecture, Radical SAM core spans Val52–Glu279. Residues Cys66, Cys70, and Cys73 each coordinate [4Fe-4S] cluster.

It belongs to the radical SAM superfamily. MqnE family. Requires [4Fe-4S] cluster as cofactor.

It carries out the reaction 3-[(1-carboxyvinyl)-oxy]benzoate + S-adenosyl-L-methionine + H2O = 6-amino-6-deoxyfutalosine + hydrogencarbonate + L-methionine + H(+). It functions in the pathway quinol/quinone metabolism; menaquinone biosynthesis. Radical SAM enzyme that catalyzes the addition of the adenosyl radical to the double bond of 3-[(1-carboxyvinyl)oxy]benzoate, leading to aminodeoxyfutalosine (AFL), a key intermediate in the formation of menaquinone (MK, vitamin K2) from chorismate. The protein is Aminodeoxyfutalosine synthase of Streptomyces coelicolor (strain ATCC BAA-471 / A3(2) / M145).